A 29-amino-acid polypeptide reads, in one-letter code: Amelogenin-like protein (29 aa).

Phosphoserine is present on S16.

It belongs to the amelogenin family.

The protein resides in the secreted. It is found in the extracellular space. Its subcellular location is the extracellular matrix. Tooth enamel proteins are produced in ameloblasts and play a role in biomineralization. This Oryctolagus cuniculus (Rabbit) protein is Amelogenin-like protein (AMEL).